Here is a 309-residue protein sequence, read N- to C-terminus: Uridylate-specific endoribonuclease C (309 aa).

The first 22 residues, 1-22 (MASGYDFGWIPVLLSLFTLTDA), serve as a signal peptide directing secretion. In terms of domain architecture, EndoU spans 27–303 (VNQELSNIFN…IGTAYPKLLS (277 aa)). 2 N-linked (GlcNAc...) asparagine glycosylation sites follow: Asn-53 and Asn-121. Residues His-181, His-197, and Lys-242 contribute to the active site.

The protein belongs to the ENDOU family. In terms of assembly, monomer. Mn(2+) is required as a cofactor.

Its subcellular location is the secreted. The catalysed reaction is ribonucleotidyl-uridine-RNA = a 5'-end dephospho-uridine-RNA + a 3'-end 2',3'-cyclophospho-ribonucleotide-RNA. Endoribonuclease that cleaves single-stranded RNAs at 5' of uridylates and releases a product with a 2',3'-cyclic phosphate at the 3'-end. The UU and GU sites are more efficiently cleaved than CU and AU sites. The protein is Uridylate-specific endoribonuclease C (endouc) of Danio rerio (Zebrafish).